The chain runs to 338 residues: N-acetyl-gamma-glutamyl-phosphate reductase (338 aa).

Cys148 is an active-site residue.

The protein belongs to the NAGSA dehydrogenase family. Type 1 subfamily.

It is found in the cytoplasm. It catalyses the reaction N-acetyl-L-glutamate 5-semialdehyde + phosphate + NADP(+) = N-acetyl-L-glutamyl 5-phosphate + NADPH + H(+). The protein operates within amino-acid biosynthesis; L-arginine biosynthesis; N(2)-acetyl-L-ornithine from L-glutamate: step 3/4. Its function is as follows. Catalyzes the NADPH-dependent reduction of N-acetyl-5-glutamyl phosphate to yield N-acetyl-L-glutamate 5-semialdehyde. The polypeptide is N-acetyl-gamma-glutamyl-phosphate reductase (Leptospira interrogans serogroup Icterohaemorrhagiae serovar Lai (strain 56601)).